We begin with the raw amino-acid sequence, 354 residues long: Chorismate synthase (354 aa).

R48 and R54 together coordinate NADP(+). Residues 125–127, 238–239, G278, 293–297, and R319 each bind FMN; these read RSS, NA, and KPTSS.

The protein belongs to the chorismate synthase family. As to quaternary structure, homotetramer. The cofactor is FMNH2.

It carries out the reaction 5-O-(1-carboxyvinyl)-3-phosphoshikimate = chorismate + phosphate. It functions in the pathway metabolic intermediate biosynthesis; chorismate biosynthesis; chorismate from D-erythrose 4-phosphate and phosphoenolpyruvate: step 7/7. Its function is as follows. Catalyzes the anti-1,4-elimination of the C-3 phosphate and the C-6 proR hydrogen from 5-enolpyruvylshikimate-3-phosphate (EPSP) to yield chorismate, which is the branch point compound that serves as the starting substrate for the three terminal pathways of aromatic amino acid biosynthesis. This reaction introduces a second double bond into the aromatic ring system. In Buchnera aphidicola subsp. Acyrthosiphon pisum (strain 5A), this protein is Chorismate synthase.